We begin with the raw amino-acid sequence, 280 residues long: Energy-coupling factor transporter ATP-binding protein EcfA1 (280 aa).

The region spanning 6–241 is the ABC transporter domain; it reads LRTENISFQY…SHMLQEIGLD (236 aa). 40–47 is a binding site for ATP; the sequence is GQNGSGKS.

The protein belongs to the ABC transporter superfamily. Energy-coupling factor EcfA family. As to quaternary structure, forms a stable energy-coupling factor (ECF) transporter complex composed of 2 membrane-embedded substrate-binding proteins (S component), 2 ATP-binding proteins (A component) and 2 transmembrane proteins (T component).

Its subcellular location is the cell membrane. Its function is as follows. ATP-binding (A) component of a common energy-coupling factor (ECF) ABC-transporter complex. Unlike classic ABC transporters this ECF transporter provides the energy necessary to transport a number of different substrates. The protein is Energy-coupling factor transporter ATP-binding protein EcfA1 of Bacillus cereus (strain ATCC 10987 / NRS 248).